The primary structure comprises 235 residues: NifU-like protein 2, chloroplastic (235 aa).

The transit peptide at 1 to 16 directs the protein to the chloroplast; it reads MQLLTLNPAAISRTPP.

This sequence belongs to the NifU family. Homodimer; disulfide-linked. The cofactor is [2Fe-2S] cluster. Predominantly expressed in leaves and floral stalks. Ubiquitous (at protein level).

It localises to the plastid. It is found in the chloroplast stroma. Functionally, molecular scaffold for [Fe-S] cluster assembly of chloroplastic iron-sulfur proteins. Required for biogenesis of ferredoxin, a major photosynthetic electron carrier containing [2Fe-2S] cluster. Required for the assembly of photosystem I complex. In Arabidopsis thaliana (Mouse-ear cress), this protein is NifU-like protein 2, chloroplastic (NIFU2).